The sequence spans 82 residues: Small ribosomal subunit protein uS17 (82 aa).

Belongs to the universal ribosomal protein uS17 family. Part of the 30S ribosomal subunit.

In terms of biological role, one of the primary rRNA binding proteins, it binds specifically to the 5'-end of 16S ribosomal RNA. This is Small ribosomal subunit protein uS17 from Phenylobacterium zucineum (strain HLK1).